The primary structure comprises 428 residues: Dual-specificity RNA methyltransferase RlmN (428 aa).

The span at 1–17 shows a compositional bias: basic and acidic residues; that stretch reads MPLHRVEALGEPQDRTG. A disordered region spans residues 1–44; the sequence is MPLHRVEALGEPQDRTGKTFSGRTNGPISSPLTDTERRMSIPQN. Positions 18-33 are enriched in polar residues; the sequence is KTFSGRTNGPISSPLT. The active-site Proton acceptor is the glutamate 136. Residues 142–381 form the Radical SAM core domain; that stretch reads EDDRGALCVS…APIRMPRGRD (240 aa). Cysteine 149 and cysteine 386 are oxidised to a cystine. [4Fe-4S] cluster-binding residues include cysteine 156, cysteine 160, and cysteine 163. S-adenosyl-L-methionine-binding positions include 212 to 213, serine 244, 266 to 268, and asparagine 343; these read GE and SLH. The active-site S-methylcysteine intermediate is the cysteine 386.

It belongs to the radical SAM superfamily. RlmN family. It depends on [4Fe-4S] cluster as a cofactor.

It localises to the cytoplasm. The enzyme catalyses adenosine(2503) in 23S rRNA + 2 reduced [2Fe-2S]-[ferredoxin] + 2 S-adenosyl-L-methionine = 2-methyladenosine(2503) in 23S rRNA + 5'-deoxyadenosine + L-methionine + 2 oxidized [2Fe-2S]-[ferredoxin] + S-adenosyl-L-homocysteine. It carries out the reaction adenosine(37) in tRNA + 2 reduced [2Fe-2S]-[ferredoxin] + 2 S-adenosyl-L-methionine = 2-methyladenosine(37) in tRNA + 5'-deoxyadenosine + L-methionine + 2 oxidized [2Fe-2S]-[ferredoxin] + S-adenosyl-L-homocysteine. Its function is as follows. Specifically methylates position 2 of adenine 2503 in 23S rRNA and position 2 of adenine 37 in tRNAs. m2A2503 modification seems to play a crucial role in the proofreading step occurring at the peptidyl transferase center and thus would serve to optimize ribosomal fidelity. The sequence is that of Dual-specificity RNA methyltransferase RlmN from Rhodospirillum rubrum (strain ATCC 11170 / ATH 1.1.1 / DSM 467 / LMG 4362 / NCIMB 8255 / S1).